The sequence spans 275 residues: Large ribosomal subunit protein uL2 (275 aa).

Disordered regions lie at residues I24–G47 and P227–K261.

It belongs to the universal ribosomal protein uL2 family. In terms of assembly, part of the 50S ribosomal subunit. Forms a bridge to the 30S subunit in the 70S ribosome.

One of the primary rRNA binding proteins. Required for association of the 30S and 50S subunits to form the 70S ribosome, for tRNA binding and peptide bond formation. It has been suggested to have peptidyltransferase activity; this is somewhat controversial. Makes several contacts with the 16S rRNA in the 70S ribosome. The polypeptide is Large ribosomal subunit protein uL2 (Xylella fastidiosa (strain M12)).